Here is a 65-residue protein sequence, read N- to C-terminus: UPF0434 protein PSHAa1659 (65 aa).

Belongs to the UPF0434 family.

This is UPF0434 protein PSHAa1659 from Pseudoalteromonas translucida (strain TAC 125).